Here is a 485-residue protein sequence, read N- to C-terminus: D-alanine--D-alanyl carrier protein ligase (485 aa).

Residue 144-145 (TS) coordinates ATP. Residue aspartate 189 coordinates D-alanine. Residue 284–289 (NTYGPT) coordinates ATP. Valine 293 is a D-alanine binding site. ATP is bound by residues aspartate 365 and lysine 473. Lysine 473 lines the D-alanine pocket.

This sequence belongs to the ATP-dependent AMP-binding enzyme family. DltA subfamily.

The protein localises to the cytoplasm. It carries out the reaction holo-[D-alanyl-carrier protein] + D-alanine + ATP = D-alanyl-[D-alanyl-carrier protein] + AMP + diphosphate. The protein operates within cell wall biogenesis; lipoteichoic acid biosynthesis. Functionally, catalyzes the first step in the D-alanylation of lipoteichoic acid (LTA), the activation of D-alanine and its transfer onto the D-alanyl carrier protein (Dcp) DltC. In an ATP-dependent two-step reaction, forms a high energy D-alanyl-AMP intermediate, followed by transfer of the D-alanyl residue as a thiol ester to the phosphopantheinyl prosthetic group of the Dcp. D-alanylation of LTA plays an important role in modulating the properties of the cell wall in Gram-positive bacteria, influencing the net charge of the cell wall. This Staphylococcus haemolyticus (strain JCSC1435) protein is D-alanine--D-alanyl carrier protein ligase.